Consider the following 431-residue polypeptide: Probable indole-3-pyruvate monooxygenase YUCCA7 (431 aa).

Glycine 36–glycine 41 is an FAD binding site. Glycine 207–glycine 212 contributes to the NADP(+) binding site.

The protein belongs to the FMO family. It depends on FAD as a cofactor. In terms of tissue distribution, expressed in shoot apex regions and siliques, and at high levels in roots. Detected in flowers, stems and leaves.

The enzyme catalyses indole-3-pyruvate + NADPH + O2 + H(+) = (indol-3-yl)acetate + CO2 + NADP(+) + H2O. It participates in plant hormone metabolism; auxin biosynthesis. Functionally, involved in auxin biosynthesis. Belongs to the set of redundant YUCCA genes probably responsible for auxin biosynthesis in roots. In Arabidopsis thaliana (Mouse-ear cress), this protein is Probable indole-3-pyruvate monooxygenase YUCCA7 (YUC7).